The chain runs to 277 residues: Diaminopimelate epimerase (277 aa).

Positions 11 and 62 each coordinate substrate. The Proton donor role is filled by Cys-71. Substrate-binding positions include 72 to 73 (GN), Asn-160, Asn-193, and 211 to 212 (ER). Cys-220 functions as the Proton acceptor in the catalytic mechanism. 221–222 (GT) is a binding site for substrate.

It belongs to the diaminopimelate epimerase family. As to quaternary structure, homodimer.

Its subcellular location is the cytoplasm. The catalysed reaction is (2S,6S)-2,6-diaminopimelate = meso-2,6-diaminopimelate. The protein operates within amino-acid biosynthesis; L-lysine biosynthesis via DAP pathway; DL-2,6-diaminopimelate from LL-2,6-diaminopimelate: step 1/1. In terms of biological role, catalyzes the stereoinversion of LL-2,6-diaminopimelate (L,L-DAP) to meso-diaminopimelate (meso-DAP), a precursor of L-lysine. This Methanococcus maripaludis (strain DSM 14266 / JCM 13030 / NBRC 101832 / S2 / LL) protein is Diaminopimelate epimerase.